The sequence spans 424 residues: UPF0229 protein PC1_1960 (424 aa).

Residues 46-109 form a disordered region; the sequence is IESGESVSIP…GQGDASKDGE (64 aa). The span at 77 to 90 shows a compositional bias: basic and acidic residues; that stretch reads PGNDHFVQNDKIER. Residues 92-101 are compositionally biased toward gly residues; sequence QGGGGGGSGQ.

This sequence belongs to the UPF0229 family.

The polypeptide is UPF0229 protein PC1_1960 (Pectobacterium carotovorum subsp. carotovorum (strain PC1)).